The sequence spans 93 residues: Large ribosomal subunit protein uL23cz/uL23cy (93 aa).

The protein belongs to the universal ribosomal protein uL23 family. In terms of assembly, part of the 50S ribosomal subunit.

It is found in the plastid. The protein resides in the chloroplast. Binds to 23S rRNA. The chain is Large ribosomal subunit protein uL23cz/uL23cy (rpl23-A) from Lactuca sativa (Garden lettuce).